Consider the following 215-residue polypeptide: Probable transaldolase (215 aa).

The active-site Schiff-base intermediate with substrate is the lysine 83.

This sequence belongs to the transaldolase family. Type 3B subfamily.

The protein resides in the cytoplasm. It catalyses the reaction D-sedoheptulose 7-phosphate + D-glyceraldehyde 3-phosphate = D-erythrose 4-phosphate + beta-D-fructose 6-phosphate. The protein operates within carbohydrate degradation; pentose phosphate pathway; D-glyceraldehyde 3-phosphate and beta-D-fructose 6-phosphate from D-ribose 5-phosphate and D-xylulose 5-phosphate (non-oxidative stage): step 2/3. Its function is as follows. Transaldolase is important for the balance of metabolites in the pentose-phosphate pathway. This Clostridium kluyveri (strain NBRC 12016) protein is Probable transaldolase.